The sequence spans 238 residues: 4-hydroxy-tetrahydrodipicolinate reductase (238 aa).

12–17 (GASGRM) contacts NAD(+). Residue arginine 40 participates in NADP(+) binding. NAD(+)-binding positions include 93-95 (GTT) and 117-120 (ASNF). The active-site Proton donor/acceptor is the histidine 149. A (S)-2,3,4,5-tetrahydrodipicolinate-binding site is contributed by histidine 150. Lysine 153 functions as the Proton donor in the catalytic mechanism. A (S)-2,3,4,5-tetrahydrodipicolinate-binding site is contributed by 159–160 (GT).

This sequence belongs to the DapB family.

The protein localises to the cytoplasm. The enzyme catalyses (S)-2,3,4,5-tetrahydrodipicolinate + NAD(+) + H2O = (2S,4S)-4-hydroxy-2,3,4,5-tetrahydrodipicolinate + NADH + H(+). It carries out the reaction (S)-2,3,4,5-tetrahydrodipicolinate + NADP(+) + H2O = (2S,4S)-4-hydroxy-2,3,4,5-tetrahydrodipicolinate + NADPH + H(+). It participates in amino-acid biosynthesis; L-lysine biosynthesis via DAP pathway; (S)-tetrahydrodipicolinate from L-aspartate: step 4/4. Catalyzes the conversion of 4-hydroxy-tetrahydrodipicolinate (HTPA) to tetrahydrodipicolinate. This Xanthomonas campestris pv. campestris (strain 8004) protein is 4-hydroxy-tetrahydrodipicolinate reductase.